The following is a 161-amino-acid chain: Nucleotide-binding protein Veis_3464 (161 aa).

The protein belongs to the YajQ family.

Functionally, nucleotide-binding protein. This is Nucleotide-binding protein Veis_3464 from Verminephrobacter eiseniae (strain EF01-2).